Here is a 469-residue protein sequence, read N- to C-terminus: Peripherin (469 aa).

Low complexity-rich tracts occupy residues methionine 1–arginine 18 and serine 27–serine 53. The segment at methionine 1–arginine 60 is disordered. The segment at methionine 1–glutamine 98 is head. Residue tyrosine 16 is modified to 3'-nitrotyrosine. Phosphoserine occurs at positions 27, 49, and 58. In terms of domain architecture, IF rod spans glutamate 96–isoleucine 406. The coil 1A stretch occupies residues glutamate 99 to alanine 131. A linker 1 region spans residues arginine 132 to leucine 142. Positions cysteine 143–leucine 238 are coil 1B. The segment at glutamine 239 to threonine 261 is linker 2. The interval alanine 262–serine 404 is coil 2. The residue at position 378 (tyrosine 378) is a 3'-nitrotyrosine. Positions arginine 405–tyrosine 469 are tail. The interval glycine 447 to tyrosine 469 is disordered. Residue tyrosine 469 is modified to Phosphotyrosine.

The protein belongs to the intermediate filament family. Forms homodimers (in vitro). Homopolymerizes into a filamentous network (in vitro). Forms heterodimers with NEFL, NEFM or NEFH (in vitro). Interacts with DST (via C-terminus). Interacts with RAB7A; the interaction is direct. Interacts with PRKCE (via phorbol-ester/DAG-type 2 domain). Phosphorylated; phosphorylation increases after nerve injury in regenerating neurons.

It is found in the cytoplasm. Its subcellular location is the cytoskeleton. It localises to the cell projection. The protein resides in the axon. The protein localises to the perikaryon. Functionally, class-III neuronal intermediate filament protein. May form an independent structural network without the involvement of other neurofilaments or may cooperate with the neuronal intermediate filament proteins NEFL, NEFH, NEFM and INA to form a filamentous network. Assembly of the neuronal intermediate filaments may be regulated by RAB7A. Plays a role in the development of unmyelinated sensory neurons. May be involved in axon elongation and axon regeneration after injury. Inhibits neurite extension in type II spiral ganglion neurons in the cochlea. The protein is Peripherin (PRPH) of Bos taurus (Bovine).